Here is a 771-residue protein sequence, read N- to C-terminus: Endoplasmin homolog (771 aa).

Residues 1-24 form the signal peptide; it reads MANSSLLRVVLVALLLLGSVTVSA. Residues Asn-63, Asp-109, and Phe-160 each contribute to the ATP site. Residue Asn-63 is glycosylated (N-linked (GlcNAc...) asparagine). A disordered region spans residues 253–282; that stretch reads TAATPEPAAEEGSLDEGAVEEDPDKEGDTQ. Residues 260–277 show a composition bias toward acidic residues; it reads AAEEGSLDEGAVEEDPDK. Asn-306 and Asn-402 each carry an N-linked (GlcNAc...) asparagine glycan. The tract at residues 727-771 is disordered; that stretch reads ADDSLLPPDDAEYTVSDTEAEEEEEQPKVDANADEEAEAVGEDDL. Over residues 758 to 771 the composition is skewed to acidic residues; the sequence is NADEEAEAVGEDDL. Positions 768-771 match the Prevents secretion from ER motif; the sequence is EDDL.

It belongs to the heat shock protein 90 family. As to quaternary structure, homotetramer.

It is found in the endoplasmic reticulum. Molecular chaperone that functions in the processing and transport of secreted proteins. Required for the synthesis of lipophosphoglycan (LPG), a cell surface glycoconjugate. Necessary for the attachment of the galactosyl residue to the mannose within the phosphoglycan repeats of the nascent LPG chain. Also required for addition of phosphoglycan to acid phosphatase. Not required for normal growth. Has ATPase activity. Binds heparin with micromolar affinity which may facilitate infection of host cells. The protein is Endoplasmin homolog of Leishmania infantum.